An 83-amino-acid chain; its full sequence is Large ribosomal subunit protein bL27c (83 aa).

Residues 1 to 21 are disordered; the sequence is MAHKKGAGSTKNGRDSNAKRL.

This sequence belongs to the bacterial ribosomal protein bL27 family.

The protein resides in the plastid. The protein localises to the chloroplast. The sequence is that of Large ribosomal subunit protein bL27c from Phaeodactylum tricornutum (strain CCAP 1055/1).